The primary structure comprises 737 residues: Photosystem I P700 chlorophyll a apoprotein A2 (737 aa).

A run of 8 helical transmembrane segments spans residues 46–69 (LFST…FHIA), 135–158 (LYQG…LHLQ), 175–199 (LNHH…HVAI), 273–291 (IAHH…GHMY), 333–356 (LHFQ…QHMY), 372–398 (AALY…IFFI), 420–442 (AIIS…LYVH), and 520–538 (FLVH…LILV). Residues C562 and C571 each coordinate [4Fe-4S] cluster. Helical transmembrane passes span 578–599 (AFYL…YWHW) and 646–668 (LAVW…MFLI). 3 residues coordinate chlorophyll a: H657, M665, and Y673. Position 674 (W674) interacts with phylloquinone. Residues 710–730 (VVGLAHFSVGYVLTYAAFLIA) traverse the membrane as a helical segment.

This sequence belongs to the PsaA/PsaB family. In terms of assembly, the PsaA/B heterodimer binds the P700 chlorophyll special pair and subsequent electron acceptors. PSI consists of a core antenna complex that captures photons, and an electron transfer chain that converts photonic excitation into a charge separation. The cyanobacterial PSI reaction center is composed of one copy each of PsaA,B,C,D,E,F,I,J,K,L,M and X, and forms trimeric complexes. PSI electron transfer chain: 5 chlorophyll a, 1 chlorophyll a', 2 phylloquinones and 3 4Fe-4S clusters. PSI core antenna: 90 chlorophyll a, 22 carotenoids, 3 phospholipids and 1 galactolipid. P700 is a chlorophyll a/chlorophyll a' dimer, A0 is one or more chlorophyll a, A1 is one or both phylloquinones and FX is a shared 4Fe-4S iron-sulfur center. is required as a cofactor.

The protein resides in the cellular thylakoid membrane. It catalyses the reaction reduced [plastocyanin] + hnu + oxidized [2Fe-2S]-[ferredoxin] = oxidized [plastocyanin] + reduced [2Fe-2S]-[ferredoxin]. Its function is as follows. PsaA and PsaB bind P700, the primary electron donor of photosystem I (PSI), as well as the electron acceptors A0, A1 and FX. PSI is a plastocyanin/cytochrome c6-ferredoxin oxidoreductase, converting photonic excitation into a charge separation, which transfers an electron from the donor P700 chlorophyll pair to the spectroscopically characterized acceptors A0, A1, FX, FA and FB in turn. Oxidized P700 is reduced on the lumenal side of the thylakoid membrane by plastocyanin or cytochrome c6. This Parasynechococcus marenigrum (strain WH8102) protein is Photosystem I P700 chlorophyll a apoprotein A2.